A 744-amino-acid polypeptide reads, in one-letter code: Receptor-like serine/threonine-protein kinase ALE2 (744 aa).

An N-terminal signal peptide occupies residues 1–19 (MRNFAMLLLLILLLHSLAS). Over 20–260 (FPICFARLFP…SQGIGFRTIA (241 aa)) the chain is Extracellular. Over residues 59-68 (PAFSPNPSRI) the composition is skewed to pro residues. The interval 59–79 (PAFSPNPSRIPPLRHKGHHRH) is disordered. Over residues 70–79 (PLRHKGHHRH) the composition is skewed to basic residues. N-linked (GlcNAc...) asparagine glycans are attached at residues Asn-87, Asn-186, Asn-204, Asn-243, and Asn-249. Residues 261–281 (IIALSGFVLILVLVGAISIIV) traverse the membrane as a helical segment. The Cytoplasmic segment spans residues 282 to 744 (KWKKIGKSSN…HLWSGNGDWL (463 aa)). The Protein kinase domain maps to 349 to 619 (FSAKRVLGEG…GEVVQALKLI (271 aa)). ATP-binding positions include 355 to 363 (LGEGGFGRV) and Lys-377. Asp-470 functions as the Proton acceptor in the catalytic mechanism. 2 disordered regions span residues 681 to 705 (EDMENRPHSASSIPRVGGLILPNRS) and 722 to 744 (GSMSEHGGPSSSRHLWSGNGDWL).

This sequence belongs to the protein kinase superfamily. Ser/Thr protein kinase family. Autophosphorylated and phosphorylated by ACR4.

The protein localises to the cell membrane. It catalyses the reaction L-seryl-[protein] + ATP = O-phospho-L-seryl-[protein] + ADP + H(+). The catalysed reaction is L-threonyl-[protein] + ATP = O-phospho-L-threonyl-[protein] + ADP + H(+). Required during the differentiation of the protoderm into shoots epidermis and cuticle. The protein is Receptor-like serine/threonine-protein kinase ALE2 (ALE2) of Arabidopsis thaliana (Mouse-ear cress).